The following is a 478-amino-acid chain: Calcium/calmodulin-dependent protein kinase type II subunit alpha (478 aa).

Tyr-13 bears the Phosphotyrosine mark. One can recognise a Protein kinase domain in the interval 13–271 (YQLFEELGKG…AAEALKHPWI (259 aa)). ATP contacts are provided by residues 19 to 27 (LGKGAFSVV) and Lys-42. Asp-135 functions as the Proton acceptor in the catalytic mechanism. Ser-257 is modified (phosphoserine). At Thr-286 the chain carries Phosphothreonine; by autocatalysis. Residues 290-300 (LKKFNARRKLK) form a calmodulin-binding region. Residues 310–320 (TRNFSGGKSGG) form an interaction with BAALC region. The tract at residues 314–341 (SGGKSGGNKKNDGVKESSESTNTTIEDE) is disordered. A compositionally biased stretch (basic and acidic residues) spans 322–331 (KKNDGVKESS). Ser-330, Ser-331, and Ser-333 each carry phosphoserine. A phosphothreonine mark is found at Thr-336 and Thr-337. Ser-404 bears the Phosphoserine mark.

Belongs to the protein kinase superfamily. CAMK Ser/Thr protein kinase family. CaMK subfamily. There are 4 genes encoding calcium/calmodulin-dependent protein kinase type II chains: CAMK2A, CAMK2B, CAMK2G and CAMK2D. The corresponding proteins assemble into homo- or heteromultimeric holoenzymes composed of 12 subunits with two hexameric rings stacked one on top of the other. Interacts with BAALC. Interacts with MPDZ. Interacts with SYN1. Interacts with CAMK2N2. Interacts with SYNGAP1. Interacts with SYNPO2. Interacts with SHANK3. Interacts with GRIN2B. Interacts with CACNB2. Interacts with LRRC7. Interacts with GRM5. Interacts with DAGLA (via C-terminal); this interaction is enhanced by autophosphorylation of CAMK2A at Thr-286. Interacts with CAMK2N1; this interaction requires CAMK2A activation by Ca(2+). Mg(2+) is required as a cofactor. In terms of processing, autophosphorylation of Thr-286 following activation by Ca(2+)/calmodulin. Phosphorylation of Thr-286 locks the kinase into an activated state. Palmitoylated. Probably palmitoylated by ZDHHC3 and ZDHHC7. Expressed in brain. As to expression, expressed in skeletal muscle.

The protein localises to the cytoplasm. It is found in the synapse. The protein resides in the postsynaptic density. Its subcellular location is the cell projection. It localises to the dendritic spine. The protein localises to the dendrite. It catalyses the reaction L-seryl-[protein] + ATP = O-phospho-L-seryl-[protein] + ADP + H(+). The enzyme catalyses L-threonyl-[protein] + ATP = O-phospho-L-threonyl-[protein] + ADP + H(+). Activated by Ca(2+)/calmodulin. Binding of calmodulin results in conformational change that relieves intrasteric autoinhibition and allows autophosphorylation of Thr-286 which turns the kinase in a constitutively active form and confers to the kinase a Ca(2+)-independent activity. Its function is as follows. Calcium/calmodulin-dependent protein kinase that functions autonomously after Ca(2+)/calmodulin-binding and autophosphorylation, and is involved in various processes, such as synaptic plasticity, neurotransmitter release and long-term potentiation. Member of the NMDAR signaling complex in excitatory synapses, it regulates NMDAR-dependent potentiation of the AMPAR and therefore excitatory synaptic transmission. Regulates dendritic spine development. Also regulates the migration of developing neurons. Phosphorylates the transcription factor FOXO3 to activate its transcriptional activity. Phosphorylates the transcription factor ETS1 in response to calcium signaling, thereby decreasing ETS1 affinity for DNA. In response to interferon-gamma (IFN-gamma) stimulation, catalyzes phosphorylation of STAT1, stimulating the JAK-STAT signaling pathway. In response to interferon-beta (IFN-beta) stimulation, stimulates the JAK-STAT signaling pathway. Acts as a negative regulator of 2-arachidonoylglycerol (2-AG)-mediated synaptic signaling via modulation of DAGLA activity. Has no kinase activity. In Mus musculus (Mouse), this protein is Calcium/calmodulin-dependent protein kinase type II subunit alpha (Camk2a).